The following is a 392-amino-acid chain: Telomere-binding protein subunit beta (392 aa).

Positions 234 to 392 (QQVESVQVQP…ASKASKRSKK (159 aa)) are disordered. The span at 247-256 (GGAKGKKKAA) shows a compositional bias: basic residues. A compositionally biased stretch (low complexity) spans 257–268 (TKSATKKTVAAK). The span at 269–284 (KTAESADVRKSVDKIV) shows a compositional bias: basic and acidic residues. The segment covering 328 to 343 (SPSGKKSTKTTDQMTM) has biased composition (polar residues). The segment covering 374 to 384 (GKASATSGKAS) has biased composition (low complexity).

Heterodimer of an alpha and a beta subunit.

The protein localises to the nucleus. The protein resides in the chromosome. It localises to the telomere. Its function is as follows. May function as protective capping of the single-stranded telomeric overhang. May also participate in telomere length regulation during DNA replication. The chain is Telomere-binding protein subunit beta (STY43) from Stylonychia mytilus (Ciliate).